A 141-amino-acid chain; its full sequence is MKFFIVLVAALALAAPAMGKTFTRCSLAREMYALGVPKSELPQWTCIAEHESSYRTNVVGPTNSNGSNDYGIFQINNYYWCQPSNGRFSYNECHLSCDALLTDNISNSVTCARKIKSQQGWTAWSTWKYCSGSLPSINDCF.

The first 19 residues, methionine 1–glycine 19, serve as a signal peptide directing secretion. Positions lysine 20–phenylalanine 141 constitute a C-type lysozyme domain. 4 disulfides stabilise this stretch: cysteine 25-cysteine 140, cysteine 46-cysteine 130, cysteine 81-cysteine 97, and cysteine 93-cysteine 111. Glutamate 51 is an active-site residue. A glycan (N-linked (GlcNAc...) asparagine) is linked at asparagine 65. Residue aspartate 69 is part of the active site. An N-linked (GlcNAc...) asparagine glycan is attached at asparagine 104.

Belongs to the glycosyl hydrolase 22 family.

The catalysed reaction is Hydrolysis of (1-&gt;4)-beta-linkages between N-acetylmuramic acid and N-acetyl-D-glucosamine residues in a peptidoglycan and between N-acetyl-D-glucosamine residues in chitodextrins.. In terms of biological role, may not function as a self-defense protein, but as a digestive enzyme, probably in the gut of the insect body. Inactive towards Micrococcus luteus. Active toward glycol chitin. The protein is Lysozyme 1 of Musca domestica (House fly).